Consider the following 439-residue polypeptide: Lipase 1 (439 aa).

An N-terminal signal peptide occupies residues 1–24 (MRCSLRMQLLLLLGLCVFISRIQG). The tract at residues 28-60 (GGEEDEEDEEEEEEEEESVEDETPEDRLQRKNI) is disordered. Residues 29-51 (GEEDEEDEEEEEEEEESVEDETP) show a composition bias toward acidic residues. Residues N124 and N151 are each glycosylated (N-linked (GlcNAc...) asparagine). S197 acts as the Charge relay system in catalysis. N346 and N379 each carry an N-linked (GlcNAc...) asparagine glycan. The Charge relay system role is filled by H393. Residue N426 is glycosylated (N-linked (GlcNAc...) asparagine).

This sequence belongs to the AB hydrolase superfamily. Lipase family. In terms of tissue distribution, in 14 hours embryos expression is seen in the foregut/midgut boundary.

The protein localises to the secreted. Its function is as follows. Could be a digestive enzyme. In Drosophila melanogaster (Fruit fly), this protein is Lipase 1 (Lip1).